A 193-amino-acid chain; its full sequence is Interleukin-23 subunit alpha (193 aa).

The N-terminal stretch at 1–22 is a signal peptide; that stretch reads MLGSRAVMLMLLLLLLPWTSQG.

The protein belongs to the IL-6 superfamily. Heterodimer with IL12B; disulfide-linked. The heterodimer is known as interleukin IL-23. Interacts with IL23R; this interaction enables recruitment of IL12RB1.

Its subcellular location is the secreted. Associates with IL12B to form the pro-inflammatory cytokine IL-23 that plays different roles in innate and adaptive immunity. Released by antigen-presenting cells such as dendritic cells or macrophages, binds to a heterodimeric receptor complex composed of IL12RB1 and IL23R to activate JAK2 and TYK2 which then phosphorylate the receptor to form a docking site leading to the phosphorylation of STAT3 and STAT4. This process leads to activation of several pathways including p38 MAPK or NF-kappa-B and promotes the production of pro-inflammatory cytokines such as interleukin-17A/IL17A. In turn, participates in the early and effective intracellular bacterial clearance. Promotes the expansion and survival of T-helper 17 cells, a CD4-positive helper T-cell subset that produces IL-17, as well as other IL-17-producing cells. The protein is Interleukin-23 subunit alpha (IL23A) of Sus scrofa (Pig).